The sequence spans 2059 residues: MSTWVALNIEPAEAVEEEVDDTKEIQIEEALKLYQNALKLHSQGPAFYAQAAEAYDALLSSEIFKYPESLSDYKRAATELELTETSDYVGNADGAEPLGDYDINDSTSSTLLQTIYLAYKNHGQFVLDSLRAIIQNAAQESDSTPGLSAEIAERASTALTSFAEALERDDTDLNLWRQSARLCSTLQSYRLARYCLESVLADDENRLEVRTEQLGLEETFAEERLRETLLSLQDRISVCQVPIKKPKKALLKFLKRQSDPYPYLPGLPDSLQNVLPSKGPLALSTARHDLKPLSPTWADLGKTILQALTDKEQGTIDLGPGTAISVSTPALSPELKATATKETQVQDQSPRAQDEELSSDPKPITHMSGEDDNNMDFQPSVKHEALDSTAEHADDHSSIDQRAEKQLIESLEIQTSQSPELANQQETPNADDADPKSSTNGARKRSSTSAVAEDQTESVRSKSRRTRLRESHAEASLQADEVSFDHNKYYEDRLEVFVRADEWMFGTVESLLSKLGIEDLGSVDELRKQISPTSDGKDLPDSDINGKAEYILPRDLRHILKGWDEGKSQATLQCDNVAALQDIQGMGKSGLAIFLEHSRKSARKLGMKQVLSGIEELLMLMNTINDGWFHLREAAFEWLKCLLMPDYGRISAQDGVFGTSNFTIINSTYTLFQWPDTLKETVVQILIREDETIYKGVSEYIEALERQILGASADTPFEYTTNHFAYLEMAQAIFELHLDIYASINNPNSEIDQGIRVQQKDRLARWSLLARTSLTHFMDYSSPGSHQDNIVLRHIWASTFHSNMTTDAEREHVLLCLQELKHLLSRLKDPVISLVNNAIMPEISIEAVDQEISKLESMDFFMRIFNTESEDPVGLIETIEPILEPASVQFVEENTSEEQGHSLPTSQLHEMGSFLDRGDATLRLFLWRRLQDAYRKIDYAPKVVSCHLRSIETIVRELWNPEHLEEPSEHRQITLLRWLKSLDGILNKTVTAVLQEPAKAYECFDMDHVKSSLSAVTLVLKLLHSFVLYEDSVRVGQLSGSDVRGALAKSLESFRDKLREMHVRCWILHYTLVREAIAQNPELFETPLEDRILYLRSVHNALGIRKMCKRSHKQFLKLVKSEIFSLDEKADYEYDICQLLYDIHGIKLSPVDGYLEDHGCPPEKLDRSTAILMIDFVMKQAKKMNIRDLSKSDLKYTIEKMQQAIGTTKSSPPLSYNKRILTAYLKSPLNPTEIFRAVRGVEDLALLPVPTESAVIAKNGWYFLLGHAALTKFRSQKRLNPVPTTDLDEAITWFRQDLEHNTQRWESWYRLAQTYDSKLEEDITWSADKINNNRTELVTWQRYAIHSYAMAVATAARNADPTPETRALVSDLYTDFGIRLYSSSREPLSMAAFSLSDFTRHYNSEENQQMYEALPFKEMRLYSVWNLASYLLKRAIPDKPKSWMTRYMLSKCLWKMFSCDDSVRGTSKHVHLDDLLDSLLDSIDALPQKRDSRSDPIFEPHYKLVSIVHKLVHRGVVTPAEGSKTLVATPWARKVPPPEEGAPWKPYIMSVIRNLKHADKSNWHHRMAVRAAHITYDDEKDAAAAAGAKGELTQQIFTKTMTIQVWRPENERPGRHFVYTTRYVYFFVALLEQLEDRASLDQLLRRVRKKQGDFINHAKLWEDLCLTYARVIRKAGNINEGHDESVFKPIGWDEFVANTARLEGLLQLAPESITLLELLRDAVELKKLNNNLMKVSLLEDLIADIYSRLYEVNMPNVIEQANEENKEKMKVDHLLMASDGAADTPTPPTSAPASEAPAPRGRTKGIARRDIQKRAETIVQRKLAPRAPIAKAPAAAESEPSHGVGAVTSAPEQTKDTATSAAVADELASGQQSDIPNSLHDSADDESELSEIDDEKLSKLAAERSLLFPNLQDRGSLDPEVGMSAAASADGDGANEGAGDGEEDADREEDADLGDEGETMVEEGETMVEEGDDGADGDEAEIDGEGEGEGEGEGEGEDEEDNEAAGEEEGVGEGDGEPEGEADANEANEMDVDDGGEQPAAAEADQESDHVSDSEAMDI.

3 TPR repeats span residues 11–44 (PAEA…HSQG), 49–86 (AQAA…TETS), and 139–172 (QESD…DDTD). 2 disordered regions span residues 337-378 (ATAT…MDFQ) and 415-476 (TSQS…AEAS). 2 stretches are compositionally biased toward polar residues: residues 340–351 (TKETQVQDQSPR) and 415–428 (TSQS…QETP). TPR repeat units lie at residues 1029–1064 (YEDS…MHVR) and 1271–1304 (TKFR…NTQR). 2 disordered regions span residues 1779–1896 (DGAA…DDEK) and 1908–2059 (FPNL…AMDI). Over residues 1807–1816 (ARRDIQKRAE) the composition is skewed to basic and acidic residues. The segment covering 1825-1836 (PRAPIAKAPAAA) has biased composition (low complexity). Positions 1850-1860 (APEQTKDTATS) are enriched in polar residues. The span at 1883-1894 (ADDESELSEIDD) shows a compositional bias: acidic residues. Residues 1925 to 1937 (AAASADGDGANEG) show a composition bias toward low complexity. Acidic residues predominate over residues 1939–2036 (GDGEEDADRE…ANEMDVDDGG (98 aa)).

The protein belongs to the HIR3 family.

The protein resides in the nucleus. Its function is as follows. Has a role in a nucleosome assembly pathway that is required for the integrity of heterochromatin and proper chromosome segregation. This is Histone transcription regulator 3 homolog (hir3) from Aspergillus oryzae (strain ATCC 42149 / RIB 40) (Yellow koji mold).